A 636-amino-acid polypeptide reads, in one-letter code: TNFAIP3-interacting protein 1 (636 aa).

Residues 20 to 73 are a coiled coil; the sequence is EASAAFERLVKENSRLKEKMQGIKMLGELLEESQMEATRLRQKAEELVKDNELL. The span at 61 to 71 shows a compositional bias: basic and acidic residues; sequence QKAEELVKDNE. Disordered regions lie at residues 61–151 and 252–283; these read QKAE…GPLP and MSNG…QQQA. S77 carries the post-translational modification Phosphoserine. An interaction with Nef region spans residues 94–412; it reads SNVTASPTAP…SPLTRQREYQ (319 aa). Residues 131-142 are compositionally biased toward polar residues; that stretch reads EEQNSPESSSHA. Positions 196-258 form a coiled coil; sequence SKVHKNEQRT…KLLMSNGNKE (63 aa). The residue at position 284 (S284) is a Phosphoserine. A coiled-coil region spans residues 294–535; it reads VALGAAEKKV…RKAKASGERY (242 aa). An interaction with Shigella flexneri ipah9.8 region spans residues 351–367; sequence DLEAEREQKQRDFDRKL. A Phosphoserine modification is found at S403. A required for inhibitory activity of TNF-induced NF-kappa-B activation region spans residues 431–588; sequence TPPSSPPTAF…MEHPPPLPNS (158 aa). T438 is subject to Phosphothreonine. Residue S442 is modified to Phosphoserine. The ubiquitin-binding domain (UBD) stretch occupies residues 452–510; the sequence is KQELVTQNELLKQQVKIFEEDFQRERSDRERMNEEKEELKKQVEKLQAQVTLSNAQLKA. The Nuclear localization signal motif lies at 524–530; sequence QKRKAKA. Y552 bears the Phosphotyrosine mark. R571 carries the asymmetric dimethylarginine modification. R599 bears the Asymmetric dimethylarginine; alternate mark. R599 is modified (omega-N-methylarginine; alternate). Positions 603–636 are disordered; the sequence is GGVRNPNQSSQVMDPPTARPTEPESPKNDREGPQ. Positions 623-636 are enriched in basic and acidic residues; sequence TEPESPKNDREGPQ. S627 bears the Phosphoserine mark.

In terms of assembly, interacts with TNFAIP3 and IKBKG (polyubiquitinated); facilitates TNFAIP3-mediated de-ubiquitination of NEMO/IKBKG. Interacts with polyubiquitin. Interacts with MAPK1, SELPLG and PIK3CD. Interacts with IRAK1 (polyubiquitinated). Interacts with MYD88; the interaction is indicative for participation in an activated TLR-signaling complex. Interacts with HIV-1 matrix protein. Interacts with TAX1BP1. As to quaternary structure, (Microbial infection) Interacts with Shigella flexneri ipah9.8; the interaction promotes polyubiquitination of IKBKG. In terms of processing, phosphorylation at Tyr-552 by SRC-family kinases recruits phosphoinositide-3-kinase (PI3K) PIK3CD:p85 heterodimer which results in integrin activation and leukocyte adhesion to activated endothelium during inflammation. Ubiquitous. Strongly expressed in peripheral blood lymphocytes, spleen and skeletal muscle, and is weakly expressed in the brain. In peripheral blood mononucleocytes, isoform 4 is mainly expressed and isoform 1 and isoform 7 are almost not expressed. Expression of isoform 1 and isoform 7 increases in leukemic cells.

It localises to the cytoplasm. The protein localises to the nucleus. In terms of biological role, inhibits NF-kappa-B activation and TNF-induced NF-kappa-B-dependent gene expression by regulating TAX1BP1 and A20/TNFAIP3-mediated deubiquitination of IKBKG; proposed to link A20/TNFAIP3 to ubiquitinated IKBKG. Involved in regulation of EGF-induced ERK1/ERK2 signaling pathway; blocks MAPK3/MAPK1 nuclear translocation and MAPK1-dependent transcription. Increases cell surface CD4(T4) antigen expression. Involved in the anti-inflammatory response of macrophages and positively regulates TLR-induced activation of CEBPB. Involved in the prevention of autoimmunity; this function implicates binding to polyubiquitin. Involved in leukocyte integrin activation during inflammation; this function is mediated by association with SELPLG and dependent on phosphorylation by SRC-family kinases. Interacts with HIV-1 matrix protein and is packaged into virions and overexpression can inhibit viral replication. May regulate matrix nuclear localization, both nuclear import of PIC (Preintegration complex) and export of GAG polyprotein and viral genomic RNA during virion production. In case of infection, promotes association of IKBKG with Shigella flexneri E3 ubiquitin-protein ligase ipah9.8 p which in turn promotes polyubiquitination of IKBKG leading to its proteasome-dependent degradation and thus is perturbing NF-kappa-B activation during bacterial infection. The polypeptide is TNFAIP3-interacting protein 1 (TNIP1) (Homo sapiens (Human)).